The following is a 458-amino-acid chain: Sulfite efflux pump SSU1 (458 aa).

Residues 1–11 lie on the Cytoplasmic side of the membrane; sequence MVANWVLALTR. A helical transmembrane segment spans residues 12 to 32; the sequence is QFDPFMFMMVMGVGISSNILY. At 33–48 the chain is on the extracellular side; sequence SFPYPARWLRICSYIM. Residues 49 to 69 form a helical membrane-spanning segment; that stretch reads FAIACLIFIAVQALQILHLIV. The Cytoplasmic portion of the chain corresponds to 70-89; that stretch reads YIKEKSFREYFNDFFRNMKH. A helical membrane pass occupies residues 90 to 110; sequence NLFWGTYPMGLVTIINFLGAL. Residues 111–135 lie on the Extracellular side of the membrane; it reads SKANTTKSPTNARNLMIFVYVLWWY. Residues 136–156 form a helical membrane-spanning segment; that stretch reads DLAVCLVIAWGISFLIWHDYY. Topologically, residues 157 to 176 are cytoplasmic; sequence PLEGIGNYPSYNIKMASENM. Residues 177 to 197 form a helical membrane-spanning segment; sequence KSVLLLDIIPLVVVASSCGTF. Residues 198-220 lie on the Extracellular side of the membrane; that stretch reads TMSEIFFHAFNRNIQLITLVICA. Residues 221–241 traverse the membrane as a helical segment; sequence LTWLHAIIFVFILIAIYFWSL. Over 242–252 the chain is Cytoplasmic; the sequence is YINKIPPMTQV. The helical transmembrane segment at 253–275 threads the bilayer; sequence FTLFLLLGPMGQGSFGVLLLTDN. At 276 to 309 the chain is on the extracellular side; sequence IKKYAGKYYPTDNITREQEILTIAVPWCFKILGM. A helical membrane pass occupies residues 310–330; it reads VSAMALLAMGYFFTVISVVSI. The Cytoplasmic portion of the chain corresponds to 331–350; sequence LSYYNKKEIENETGKVKRVY. A helical membrane pass occupies residues 351-371; sequence TFHKGFWGMTFPMGTMSLGNE. At 372 to 387 the chain is on the extracellular side; sequence ELYVQYNQYVPLYAFR. The chain crosses the membrane as a helical span at residues 388 to 408; it reads VLGTIYGGVCVCWSILCLLCT. Residues 409–458 are Cytoplasmic-facing; the sequence is LHEYSKKMLHAARKSSLFSESGTEKTTVSPYNSIESVEESNSALDFTRLA. Phosphoserine occurs at positions 444, 448, and 450.

This sequence belongs to the tellurite-resistance/dicarboxylate transporter (TDT) family.

The protein resides in the cell membrane. Functionally, involved in efflux of free sulfite. Mutations in the SSU1 gene cause sensitivity to sulfite. This Saccharomyces cerevisiae (strain ATCC 204508 / S288c) (Baker's yeast) protein is Sulfite efflux pump SSU1 (SSU1).